Reading from the N-terminus, the 432-residue chain is Phosphomethylpyrimidine synthase (432 aa).

Substrate contacts are provided by residues Asn66, Met95, Tyr124, His163, 185-187 (SRG), 226-229 (DGLR), and Glu265. His269 provides a ligand contact to Zn(2+). Residue Tyr292 coordinates substrate. Position 333 (His333) interacts with Zn(2+). Residues Cys409, Cys412, and Cys416 each contribute to the [4Fe-4S] cluster site.

Belongs to the ThiC family. The cofactor is [4Fe-4S] cluster.

It carries out the reaction 5-amino-1-(5-phospho-beta-D-ribosyl)imidazole + S-adenosyl-L-methionine = 4-amino-2-methyl-5-(phosphooxymethyl)pyrimidine + CO + 5'-deoxyadenosine + formate + L-methionine + 3 H(+). It participates in cofactor biosynthesis; thiamine diphosphate biosynthesis. Its function is as follows. Catalyzes the synthesis of the hydroxymethylpyrimidine phosphate (HMP-P) moiety of thiamine from aminoimidazole ribotide (AIR) in a radical S-adenosyl-L-methionine (SAM)-dependent reaction. The polypeptide is Phosphomethylpyrimidine synthase (Thermoanaerobacter sp. (strain X514)).